The primary structure comprises 352 residues: Uroporphyrinogen decarboxylase (352 aa).

Residues 26–30 (RQAGR), Asp-76, Tyr-153, Ser-208, and His-323 contribute to the substrate site.

The protein belongs to the uroporphyrinogen decarboxylase family. As to quaternary structure, homodimer.

The protein localises to the cytoplasm. It carries out the reaction uroporphyrinogen III + 4 H(+) = coproporphyrinogen III + 4 CO2. Its pathway is porphyrin-containing compound metabolism; protoporphyrin-IX biosynthesis; coproporphyrinogen-III from 5-aminolevulinate: step 4/4. Its function is as follows. Catalyzes the decarboxylation of four acetate groups of uroporphyrinogen-III to yield coproporphyrinogen-III. The sequence is that of Uroporphyrinogen decarboxylase from Prochlorococcus marinus (strain NATL1A).